The following is a 269-amino-acid chain: dITP/XTP pyrophosphatase (269 aa).

Position 22–27 (22–27) interacts with substrate; that stretch reads SNNAHK. The active-site Proton acceptor is Asp-82. Position 82 (Asp-82) interacts with Mg(2+). Residues Ser-83, 165 to 168, Lys-188, and 193 to 194 each bind substrate; these read FGYD and HR.

The protein belongs to the HAM1 NTPase family. As to quaternary structure, homodimer. The cofactor is Mg(2+).

It catalyses the reaction XTP + H2O = XMP + diphosphate + H(+). The catalysed reaction is dITP + H2O = dIMP + diphosphate + H(+). The enzyme catalyses ITP + H2O = IMP + diphosphate + H(+). Its function is as follows. Pyrophosphatase that catalyzes the hydrolysis of nucleoside triphosphates to their monophosphate derivatives, with a high preference for the non-canonical purine nucleotides XTP (xanthosine triphosphate), dITP (deoxyinosine triphosphate) and ITP. Seems to function as a house-cleaning enzyme that removes non-canonical purine nucleotides from the nucleotide pool, thus preventing their incorporation into DNA/RNA and avoiding chromosomal lesions. In Treponema pallidum (strain Nichols), this protein is dITP/XTP pyrophosphatase.